A 251-amino-acid polypeptide reads, in one-letter code: tRNA (guanine-N(1)-)-methyltransferase (251 aa).

S-adenosyl-L-methionine-binding positions include glycine 113 and 133–138; that span reads IGDYVL.

The protein belongs to the RNA methyltransferase TrmD family. In terms of assembly, homodimer.

It is found in the cytoplasm. The enzyme catalyses guanosine(37) in tRNA + S-adenosyl-L-methionine = N(1)-methylguanosine(37) in tRNA + S-adenosyl-L-homocysteine + H(+). Its function is as follows. Specifically methylates guanosine-37 in various tRNAs. The sequence is that of tRNA (guanine-N(1)-)-methyltransferase from Pectobacterium carotovorum subsp. carotovorum (strain PC1).